A 585-amino-acid chain; its full sequence is Frizzled-5 (585 aa).

A signal peptide spans 1-26 (MARPDPSAPPSLLLLLLAQLVGRAAA). The Extracellular portion of the chain corresponds to 27–238 (ASKAPVCQEI…ADERTFATFW (212 aa)). The 123-residue stretch at 28-150 (SKAPVCQEIT…RDAEVLCMDY (123 aa)) folds into the FZ domain. 5 disulfide bridges follow: Cys-33/Cys-94, Cys-41/Cys-87, Cys-78/Cys-116, Cys-105/Cys-147, and Cys-109/Cys-133. Asn-47 is a glycosylation site (N-linked (GlcNAc...) asparagine). Residue Asn-151 is glycosylated (N-linked (GlcNAc...) asparagine). A disordered region spans residues 156–179 (TTAPPRPFPAKPTLPGPPGAPASG). Positions 159–175 (PPRPFPAKPTLPGPPGA) are enriched in pro residues. A helical membrane pass occupies residues 239–259 (IGLWSVLCFISTSTTVATFLI). The Cytoplasmic segment spans residues 260-270 (DMERFRYPERP). A helical transmembrane segment spans residues 271–291 (IIFLSACYLCVSLGFLVRLVV). Residues 292–315 (GHASVACSREHNHIHYETTGPALC) lie on the Extracellular side of the membrane. The helical transmembrane segment at 316–336 (TIVFLLVYFFGMASSIWWVIL) threads the bilayer. The Cytoplasmic segment spans residues 337–358 (SLTWFLAAGMKWGNEAIAGYAQ). The chain crosses the membrane as a helical span at residues 359–379 (YFHLAAWLIPSVKSITALALS). Residues 380-402 (SVDGDPVAGICYVGNQNLNSLRG) lie on the Extracellular side of the membrane. The chain crosses the membrane as a helical span at residues 403–423 (FVLGPLVLYLLVGTLFLLAGF). The Cytoplasmic segment spans residues 424 to 449 (VSLFRIRSVIKQGGTKTDKLEKLMIR). Residues 450–470 (IGIFTLLYTVPASIVVACYLY) traverse the membrane as a helical segment. The Extracellular segment spans residues 471–500 (EQHYRESWEAALTCACPGHDTGQPRAKPEY). The chain crosses the membrane as a helical span at residues 501-521 (WVLMLKYFMCLVVGITSGVWI). Residues 522–585 (WSGKTVESWR…YHKQVSLSHV (64 aa)) lie on the Cytoplasmic side of the membrane. The Lys-Thr-X-X-X-Trp motif, mediates interaction with the PDZ domain of Dvl family members signature appears at 525-530 (KTVESW). Residues 583–585 (SHV) carry the PDZ-binding motif.

The protein belongs to the G-protein coupled receptor Fz/Smo family. Binding of unsaturated fatty acid molecules (via FZ domain) promotes homodimerization. Interacts with WNT2B. Interacts with WNT3A. Interacts with WNT7A. Interacts with GOPC. Ubiquitinated by RNF43 and ZNRF3, leading to its degradation by the proteasome.

Its subcellular location is the cell membrane. The protein resides in the golgi apparatus membrane. The protein localises to the synapse. It is found in the perikaryon. It localises to the cell projection. Its subcellular location is the dendrite. The protein resides in the axon. Receptor for Wnt proteins. Functions in the canonical Wnt/beta-catenin signaling pathway. In vitro activates WNT2, WNT10B, WNT5A, but not WNT2B or WNT4 signaling. In neurons, activation by WNT7A promotes formation of synapses. May be involved in transduction and intercellular transmission of polarity information during tissue morphogenesis and/or in differentiated tissues. Plays a role in yolk sac angiogenesis and in placental vascularization. Plays a role in ocular development. The protein is Frizzled-5 (FZD5) of Homo sapiens (Human).